Here is an 89-residue protein sequence, read N- to C-terminus: uncharacterized protein (89 aa).

This is an uncharacterized protein from Archaeoglobus fulgidus (strain ATCC 49558 / DSM 4304 / JCM 9628 / NBRC 100126 / VC-16).